The sequence spans 1213 residues: Oligopeptidase PhomG' (1213 aa).

His-447 contacts Zn(2+). Glu-448 is an active-site residue. Zn(2+)-binding residues include His-451 and His-454.

This sequence belongs to the peptidase M3 family. Monomer. The cofactor is Zn(2+).

It functions in the pathway mycotoxin biosynthesis. Functionally, oligopeptidase; part of the gene cluster that mediates the biosynthesis of the phomopsins, a group of hexapeptide mycotoxins which infects lupins and causes lupinosis disease in livestock. Within the pathway, phomG and phomG' are probably involved in the processing of the phomA and phomA' precursors. The pathway starts with the processing of the precursor phomA by several endopeptidases including kexin proteases as well as the cluster-specific S41 family peptidase phomP1 and the oligopeptidase phomG to produce 10 identical copies of the hexapeptide Tyr-Val-Ile-Pro-Ile-Asp. After being excised from the precursor peptide, the core peptides are cyclized and modified post-translationally by enzymes encoded within the gene cluster. The timing and order of proteolysis of the phomA precursor and PTMs are still unknown. Two tyrosinase-like enzymes, phomQ1 and phomQ2, catalyze the chlorination and hydroxylation of Tyr, respectively. PhomYb, is proposed to be involved in the construction of the macrocyclic structure. The other 4 ustYa family proteins may be involved in PTMs that generate the unique structure of phomopsin A. PhomYa is required for the hydroxylation of C-beta of Tyr. PhomYc, phomYd, and phomYe are responsible for the biosynthesis of 2,3-dehydroisoleucine (dIle), 2,3-dehydroaspartic acid (dAsp), and 3,4-dehydroproline (dPro), respectively. While dIle formation by phomYc is indispensable for the installation of dAsp by phomYd, the order of the other PTMs have not been elucidated yet. Most of the biosynthetic enzymes likely have broad substrate specificity, and thus, there might be a metabolic grid from a precursor to phomopsin A. The enzyme(s) responsible for the biosynthesis of 3,4-dehydrovaline (dVal) have also not been identified yet. Finally, phomM acts as an S-adenosylmethionine-dependent alpha-N-methyltransferase that catalyzes two successive N-methylation reactions, converting N-desmethyl-phomopsin A to phomopsin A and phomopsin A further to an N,N-dimethylated congener called phomopsin E. This is Oligopeptidase PhomG' from Diaporthe leptostromiformis (Lupinosis disease fungus).